Reading from the N-terminus, the 105-residue chain is Small ribosomal subunit protein bS18 (105 aa).

The segment covering 1 to 10 (MAEETNQQAP) has biased composition (polar residues). The disordered stretch occupies residues 1–34 (MAEETNQQAPESGASSSQPTSRPSGPRGGSGGRK). The span at 12–25 (SGASSSQPTSRPSG) shows a compositional bias: low complexity.

Belongs to the bacterial ribosomal protein bS18 family. As to quaternary structure, part of the 30S ribosomal subunit. Forms a tight heterodimer with protein bS6.

Functionally, binds as a heterodimer with protein bS6 to the central domain of the 16S rRNA, where it helps stabilize the platform of the 30S subunit. In Acidobacterium capsulatum (strain ATCC 51196 / DSM 11244 / BCRC 80197 / JCM 7670 / NBRC 15755 / NCIMB 13165 / 161), this protein is Small ribosomal subunit protein bS18.